Reading from the N-terminus, the 188-residue chain is Pyridoxal 5'-phosphate synthase subunit PdxT (188 aa).

An L-glutamine-binding site is contributed by Gly-46 to Ser-48. Cys-78 (nucleophile) is an active-site residue. Residues Arg-105 and Ile-134–Arg-135 contribute to the L-glutamine site. Residues His-170 and Glu-172 each act as charge relay system in the active site.

This sequence belongs to the glutaminase PdxT/SNO family. In terms of assembly, in the presence of PdxS, forms a dodecamer of heterodimers. Only shows activity in the heterodimer.

It carries out the reaction aldehydo-D-ribose 5-phosphate + D-glyceraldehyde 3-phosphate + L-glutamine = pyridoxal 5'-phosphate + L-glutamate + phosphate + 3 H2O + H(+). The catalysed reaction is L-glutamine + H2O = L-glutamate + NH4(+). It functions in the pathway cofactor biosynthesis; pyridoxal 5'-phosphate biosynthesis. Catalyzes the hydrolysis of glutamine to glutamate and ammonia as part of the biosynthesis of pyridoxal 5'-phosphate. The resulting ammonia molecule is channeled to the active site of PdxS. The chain is Pyridoxal 5'-phosphate synthase subunit PdxT from Thermotoga sp. (strain RQ2).